A 122-amino-acid polypeptide reads, in one-letter code: UPF0102 protein R00337 (122 aa).

The protein belongs to the UPF0102 family.

In Rhizobium meliloti (strain 1021) (Ensifer meliloti), this protein is UPF0102 protein R00337.